Consider the following 271-residue polypeptide: ELH (271 aa).

An N-terminal signal peptide occupies residues 1–28 (MKRPNNRPTNTMSLILCLTLSSLCVSSQ). 2 propeptides span residues 29-95 (SASV…NEKR) and 162-184 (AAGGMEQSEGQNPETESHSRRKR). The disordered stretch occupies residues 162–190 (AAGGMEQSEGQNPETESHSRRKRSVLTPS). The residue at position 241 (K241) is a Lysine amide.

Belongs to the molluscan ELH family. Bag cell neurons.

It localises to the secreted. In terms of biological role, ELH acts as a neurotransmitter locally, upon neurons of the abdominal ganglion and as a hormone by diffusing into the circulating hemolymph and modulating the activity of other organs. It specifically causes contraction of smooth muscle in the ovotestis and expulsion of the egg string. Alpha-BCP decreases the activity of a cluster of neurons in the left upper quadrant of the abdominal ganglion. Its function is as follows. Beta-BCP specifically excites 2 neurons, L1 and R1, in the abdominal ganglion. This is ELH from Aplysia californica (California sea hare).